The following is a 117-amino-acid chain: MSSVLSAYRNALRATKVAFRQDLPILQAARVQLKQGIRDNSNLQAQPEIEEAVQKLNEVAKFLIQNIVQGEKQQDGKYFLNFHEKTELGDNETIKQGRKEMGSLAGKKGSSIKSCND.

The N-terminal 10 residues, 1 to 10, are a transit peptide targeting the mitochondrion; that stretch reads MSSVLSAYRN. A disordered region spans residues 98-117; the sequence is RKEMGSLAGKKGSSIKSCND.

The protein belongs to the complex I LYR family. MZM1 subfamily. Interacts with RIP1.

Its subcellular location is the mitochondrion matrix. Assembly factor required for Rieske Fe-S protein RIP1 incorporation into the cytochrome b-c1 (CIII) complex. Functions as a chaperone, binding to this subunit within the mitochondrial matrix and stabilizing it prior to its translocation and insertion into the late CIII dimeric intermediate within the mitochondrial inner membrane. Modulates the mitochondrial matrix zinc pool. The polypeptide is Mitochondrial zinc maintenance protein 1, mitochondrial (MZM1) (Candida albicans (strain SC5314 / ATCC MYA-2876) (Yeast)).